The primary structure comprises 225 residues: Guanylate kinase (225 aa).

The region spanning 20-198 is the Guanylate kinase-like domain; the sequence is GNLFMVVAPS…ALSELQCLVA (179 aa). 27–34 serves as a coordination point for ATP; the sequence is APSGAGKS.

The protein belongs to the guanylate kinase family.

The protein resides in the cytoplasm. The catalysed reaction is GMP + ATP = GDP + ADP. Its function is as follows. Essential for recycling GMP and indirectly, cGMP. The sequence is that of Guanylate kinase from Paraburkholderia xenovorans (strain LB400).